The following is a 335-amino-acid chain: Lipase chaperone (335 aa).

Residues 1–21 (MSGSILLLPLAIALGLGFFIA) form a helical membrane-spanning segment.

Belongs to the lipase chaperone family.

Its subcellular location is the cell inner membrane. Its function is as follows. May be involved in the folding of the extracellular lipase during its passage through the periplasm. The chain is Lipase chaperone from Stutzerimonas stutzeri (strain A1501) (Pseudomonas stutzeri).